Here is a 163-residue protein sequence, read N- to C-terminus: Probable protein tyrosine phosphatase type IVA B (163 aa).

The Tyrosine-protein phosphatase domain occupies T10–K161. A disulfide bridge connects residues C49 and C104. D70 functions as the Proton donor in the catalytic mechanism. Residue C104 is the Phosphocysteine intermediate of the active site. I105–R110 serves as a coordination point for phosphate. R110 lines the substrate pocket. C160 is subject to Cysteine methyl ester. C160 is lipidated: S-farnesyl cysteine. A propeptide spans K161–M163 (removed in mature form).

The protein belongs to the protein-tyrosine phosphatase family.

The protein resides in the membrane. It carries out the reaction O-phospho-L-tyrosyl-[protein] + H2O = L-tyrosyl-[protein] + phosphate. This chain is Probable protein tyrosine phosphatase type IVA B, found in Dictyostelium discoideum (Social amoeba).